Here is a 493-residue protein sequence, read N- to C-terminus: Solute carrier family 2, facilitated glucose transporter member 3 (493 aa).

Residues 1-10 (MGTAKVTPSL) are Cytoplasmic-facing. A helical transmembrane segment spans residues 11-32 (VFAVTVATIGSFQFGYNTGVIN). At 33–64 (APETIIKDFLNYTLEERLEDLPREGLLTTLWS) the chain is on the extracellular side. A glycan (N-linked (GlcNAc...) asparagine) is linked at N43. The helical transmembrane segment at 65-85 (LCVAIFSVGGMIGSFSVGLFV) threads the bilayer. The Cytoplasmic segment spans residues 86-90 (NRFGR). The helical transmembrane segment at 91–111 (RNSMLLVNLIAILGGCLMGFA) threads the bilayer. The Extracellular segment spans residues 112 to 118 (KIAESVE). A helical transmembrane segment spans residues 119–142 (MLILGRLIIGIFCGLCTGFVPMYI). Residues 143–153 (GEVSPTALRGA) are Cytoplasmic-facing. The helical transmembrane segment at 154 to 174 (FGTLNQLGIVVGILVAQVFGL) threads the bilayer. Q159 provides a ligand contact to D-glucose. Topologically, residues 175-183 (DFILGSEEL) are extracellular. Residues 184–204 (WPGLLGLTIIPAILQSAALPF) form a helical membrane-spanning segment. The Cytoplasmic segment spans residues 205 to 269 (CPESPRFLLI…LFKSPSYFQP (65 aa)). The residue at position 232 (T232) is a Phosphothreonine. A helical membrane pass occupies residues 270-290 (LLISVVLQLSQQFSGINAVFY). The tract at residues 277–279 (QLS) is important for selectivity against fructose. Residues 280–281 (QQ) and N286 contribute to the D-glucose site. The Extracellular segment spans residues 291-304 (YSTGIFQDAGVQEP). A helical membrane pass occupies residues 305-325 (IYATIGAGVVNTIFTVVSLFL). N315 contacts D-glucose. At 326-331 (VERAGR) the chain is on the cytoplasmic side. The chain crosses the membrane as a helical span at residues 332-352 (RTLHMIGLGGMAVCSVFMTIS). Over 353–363 (LLLKDEYEAMS) the chain is Extracellular. Residues 364–389 (FVCIVAILVYVAFFEIGPGPIPWFIV) form a helical membrane-spanning segment. The D-glucose site is built by E378 and W386. The Cytoplasmic portion of the chain corresponds to 390–399 (AELFSQGPRP). Residues 400 to 420 (AAMAVAGCSNWTSNFLVGMFF) traverse the membrane as a helical segment. Over 421-429 (PSAAAYLGA) the chain is Extracellular. Residues 430–450 (YVFIIFAAFLVFFLIFTSFKV) traverse the membrane as a helical segment. The Cytoplasmic portion of the chain corresponds to 451–493 (PETKGRTFEDITRAFEGQAHSGKGSAGVELNSMQPVKETPGNA). 3 positions are modified to phosphoserine: S471, S475, and S482. T489 bears the Phosphothreonine mark.

This sequence belongs to the major facilitator superfamily. Sugar transporter (TC 2.A.1.1) family. Glucose transporter subfamily. In terms of assembly, interacts with SMIM43; the interaction may promote SLC2A3-mediated glucose transport to meet the energy needs of mesendoderm differentiation. As to expression, brain and osteoblastic cells (at protein level). Highly expressed in brain.

The protein resides in the cell membrane. It localises to the perikaryon. The protein localises to the cell projection. It carries out the reaction D-glucose(out) = D-glucose(in). It catalyses the reaction D-galactose(in) = D-galactose(out). With respect to regulation, deoxyglucose transport is inhibited by D-glucose, D-galactose and maltose. Galactose transport is inhibited by D-glucose and maltose. Its function is as follows. Facilitative glucose transporter. Can also mediate the uptake of various other monosaccharides across the cell membrane. Mediates the uptake of glucose, 2-deoxyglucose, galactose, mannose, xylose and fucose, and probably also dehydroascorbate. Does not mediate fructose transport. Required for mesendoderm differentiation. This is Solute carrier family 2, facilitated glucose transporter member 3 from Rattus norvegicus (Rat).